The primary structure comprises 1201 residues: Zinc finger protein sdc-1 (1201 aa).

7 consecutive C2H2-type zinc fingers follow at residues 117–139, 145–168, 233–254, 268–290, 486–513, 521–543, and 652–674; these read LTCAHCDWSFDNVMKLVRHRGVH, YMCQVCLTLFGHTYNLFMHWRTSC, SSCHLCHLPVPNKFLEAHGNVH, YFCHICGTVFIEQDNLFKHWRLH, IVCHKCDSKKLTITFSTEVRLKYHLLRH, YHCAICKIIVYNRSHEEHWINDC, and VVCFHCGTRCHYTLLHDHLDYCH. The tract at residues 1164 to 1201 is disordered; it reads KRRNSETREHELIELDTDDLNEPSTSDGRYSFGHHGYR. Residues 1167–1176 are compositionally biased toward basic and acidic residues; sequence NSETREHELI.

In terms of assembly, component of the SDC complex, which consists of sdc-1, sdc-2 and sdc-3. Within the complex, interacts with sdc-2 and sdc-3.

It is found in the nucleus. Its subcellular location is the chromosome. In terms of biological role, embryonic transcription factor regulating downstream genes involved specifically in the sex determination and dosage compensation pathways, or regulating other genes involved in the coordinate control of both processes. Component of the SDC complex that functions in sex determination and in X chromosome dosage compensation specifically in hermaphrodite (XX) animals. Involved in the recruitment of the condensin I-like dosage compensation complex to the male sex-determining autosomal gene her-1, thereby contributing to its repression and initiating hermaphrodite sexual development. Similarly, might contribute to X-linked gene repression through recruitment of the dosage compensation complex to the X chromosomes in hermaphrodites. Seems to be involved in the depletion of histone H4 lysine 16 acetylation (H4K16ac) on dosage compensated X chromosomes. Plays a role in developmental rate and body fat regulation downstream of the TOR complex 2 pathway. This is Zinc finger protein sdc-1 (sdc-1) from Caenorhabditis elegans.